Reading from the N-terminus, the 851-residue chain is DNA mismatch repair protein MutS (851 aa).

614–621 is an ATP binding site; it reads GPNMGGKS.

The protein belongs to the DNA mismatch repair MutS family.

Functionally, this protein is involved in the repair of mismatches in DNA. It is possible that it carries out the mismatch recognition step. This protein has a weak ATPase activity. The chain is DNA mismatch repair protein MutS from Yersinia pestis.